The sequence spans 141 residues: Sperm protein associated with the nucleus on the X chromosome N3 (141 aa).

Polar residues predominate over residues 1-10 (MEQPTSSTNG). Disordered stretches follow at residues 1–47 (MEQP…TKTS) and 66–141 (NQLE…SGED). Basic and acidic residues predominate over residues 11–26 (EKTKSPCESNNKKNDE). Over residues 66 to 80 (NQLENEQSQENSINP) the composition is skewed to polar residues. Positions 84–103 (EEDEGVDLSEGSSNEDEDLG) are enriched in acidic residues. Over residues 132–141 (EGSSQDSGED) the composition is skewed to polar residues.

Belongs to the SPAN-X family.

The polypeptide is Sperm protein associated with the nucleus on the X chromosome N3 (SPANXN3) (Homo sapiens (Human)).